Reading from the N-terminus, the 397-residue chain is Phosphoglycerate kinase (397 aa).

Substrate-binding positions include 19-21 (DFN), R35, 58-61 (HLGR), R117, and R150. ATP is bound by residues K201, E323, and 349–352 (GGDS).

Belongs to the phosphoglycerate kinase family. In terms of assembly, monomer.

It localises to the cytoplasm. The enzyme catalyses (2R)-3-phosphoglycerate + ATP = (2R)-3-phospho-glyceroyl phosphate + ADP. Its pathway is carbohydrate degradation; glycolysis; pyruvate from D-glyceraldehyde 3-phosphate: step 2/5. The protein is Phosphoglycerate kinase of Syntrophobacter fumaroxidans (strain DSM 10017 / MPOB).